The chain runs to 347 residues: MTQNTSLSYRDAGVDIDAGDALVERIKPLAKKTLREGVLGGIGGFGALFEVPKRYKEPVLVSGTDGVGTKLRLAFDLNRHDTVGQDLVAMSVNDILVLGAESLFFLDYFACGKLDVDTAAAVVGGIAKGCELAGCALIGGETAEMPGMYPAGEYDLAGFAVGVVEKSKAIDGKASITPGDVVLGLASSGAHSNGYSLVRKIIERSKPDMNAKFDGERTLADVVMAPTRIYVKQVLATMQKVTIKGMAHITGGGLLENVPRVLPENTVAELEKAAWPRPKLFDWMQAEGNVAENEMHRVFNCGIGLVIVVAAADADAAMAELKAQGEAVYRIGKIRARSGDEAQTLVV.

It belongs to the AIR synthase family.

The protein localises to the cytoplasm. The catalysed reaction is 2-formamido-N(1)-(5-O-phospho-beta-D-ribosyl)acetamidine + ATP = 5-amino-1-(5-phospho-beta-D-ribosyl)imidazole + ADP + phosphate + H(+). It functions in the pathway purine metabolism; IMP biosynthesis via de novo pathway; 5-amino-1-(5-phospho-D-ribosyl)imidazole from N(2)-formyl-N(1)-(5-phospho-D-ribosyl)glycinamide: step 2/2. The protein is Phosphoribosylformylglycinamidine cyclo-ligase of Dechloromonas aromatica (strain RCB).